A 449-amino-acid polypeptide reads, in one-letter code: MEFFISMSETIKYNDDDHKTLFLKTLNEQRLEGEFCDIAIVVEDVKFRAHRCVLAACSTYFKKLFKKLEVDSSSVIEIDFLRSDIFEEVLNYMYTAKISVKKEDVNLMMSSGQILGIRFLDKLCSQKRDVSSPDESNGQSKSKYCLKLNRPIGDAADAQDDDVEEIGDQDDSPSDDTVEGTPPSQEDGKSPTTTLRVQEAILKELGSEEVRKVNCYGQEVESMETPESKDLGSQTPQALTFNDGMSEVKDEQTPGWTTAASDMKFEYLLYGHHREQIACQACGKTFSDEGRLRKHEKLHTADRPFVCEMCTKGFTTQAHLKEHLKIHTGYKPYSCEVCGKSFIRAPDLKKHERVHSNERPFACHMCDKAFKHKSHLKDHERRHRGEKPFVCGSCTKAFAKASDLKRHENNMHSERKQVTPSAIQSETEQLQAAAMAAEAEQQLETIACS.

One can recognise a BTB domain in the interval 36–102 (CDIAIVVEDV…MYTAKISVKK (67 aa)). K46 participates in a covalent cross-link: Glycyl lysine isopeptide (Lys-Gly) (interchain with G-Cter in SUMO2). The short motif at 50–66 (HRCVLAACSTYFKKLFK) is the Nuclear localization signal element. The interval 156–194 (ADAQDDDVEEIGDQDDSPSDDTVEGTPPSQEDGKSPTTT) is disordered. A compositionally biased stretch (acidic residues) spans 157–178 (DAQDDDVEEIGDQDDSPSDDTV). Residues K203 and K249 each participate in a glycyl lysine isopeptide (Lys-Gly) (interchain with G-Cter in SUMO2) cross-link. 5 C2H2-type zinc fingers span residues 277 to 304 (IACQ…ADRP), 305 to 332 (FVCE…GYKP), 333 to 360 (YSCE…NERP), 361 to 388 (FACH…GEKP), and 389 to 417 (FVCG…ERKQ). The segment covering 405-417 (KRHENNMHSERKQ) has biased composition (basic and acidic residues). The segment at 405–424 (KRHENNMHSERKQVTPSAIQ) is disordered.

Belongs to the krueppel C2H2-type zinc-finger protein family. As to quaternary structure, interacts with ZBTB21. Ubiquitous.

Its subcellular location is the nucleus. Functionally, transcriptional activator of the dopamine transporter (DAT), binding it's promoter at the consensus sequence 5'-CCTGCACAGTTCACGGA-3'. Binds to 5'-d(GCC)(n)-3' trinucleotide repeats in promoter regions and acts as a repressor of the FMR1 gene. Transcriptional repressor of MYC and thymidine kinase promoters. This chain is Zinc finger and BTB domain-containing protein 14 (Zbtb14), found in Mus musculus (Mouse).